The primary structure comprises 402 residues: UPF0261 protein BPP1817 (402 aa).

It belongs to the UPF0261 family.

This is UPF0261 protein BPP1817 from Bordetella parapertussis (strain 12822 / ATCC BAA-587 / NCTC 13253).